Consider the following 206-residue polypeptide: Cytochrome c oxidase assembly protein CtaG (206 aa).

Residues 1–17 (MPEVQPSALPKPAPRLG) are Cytoplasmic-facing. A helical; Signal-anchor for type II membrane protein transmembrane segment spans residues 18–40 (RDAAVASICGFVVALMVGASFAA). The Periplasmic portion of the chain corresponds to 41–206 (VPFYDWFCRT…GEPDQRKGNL (166 aa)).

Belongs to the COX11/CtaG family.

Its subcellular location is the cell inner membrane. In terms of biological role, exerts its effect at some terminal stage of cytochrome c oxidase synthesis, probably by being involved in the insertion of the copper B into subunit I. The sequence is that of Cytochrome c oxidase assembly protein CtaG from Rhodopseudomonas palustris (strain BisB5).